Here is a 424-residue protein sequence, read N- to C-terminus: Serine--tRNA ligase (424 aa).

231–233 (TAE) serves as a coordination point for L-serine. 261–263 (RSE) is a binding site for ATP. Glutamate 284 contacts L-serine. 348-351 (ETSS) lines the ATP pocket. Serine 383 is a binding site for L-serine.

The protein belongs to the class-II aminoacyl-tRNA synthetase family. Type-1 seryl-tRNA synthetase subfamily. As to quaternary structure, homodimer. The tRNA molecule binds across the dimer.

The protein resides in the cytoplasm. The catalysed reaction is tRNA(Ser) + L-serine + ATP = L-seryl-tRNA(Ser) + AMP + diphosphate + H(+). It catalyses the reaction tRNA(Sec) + L-serine + ATP = L-seryl-tRNA(Sec) + AMP + diphosphate + H(+). Its pathway is aminoacyl-tRNA biosynthesis; selenocysteinyl-tRNA(Sec) biosynthesis; L-seryl-tRNA(Sec) from L-serine and tRNA(Sec): step 1/1. In terms of biological role, catalyzes the attachment of serine to tRNA(Ser). Is also able to aminoacylate tRNA(Sec) with serine, to form the misacylated tRNA L-seryl-tRNA(Sec), which will be further converted into selenocysteinyl-tRNA(Sec). The protein is Serine--tRNA ligase of Metamycoplasma arthritidis (strain 158L3-1) (Mycoplasma arthritidis).